The chain runs to 69 residues: Guanine nucleotide-binding protein G(I)/G(S)/G(O) subunit gamma-T2 (69 aa).

Residues 47–69 form a disordered region; it reads DPLLKGIPEDKNPFKEKGGCMIS. The segment covering 53–69 has biased composition (basic and acidic residues); the sequence is IPEDKNPFKEKGGCMIS. Position 66 is a cysteine methyl ester (Cys66). Residue Cys66 is the site of S-farnesyl cysteine attachment. The propeptide at 67–69 is removed in mature form; sequence MIS.

Belongs to the G protein gamma family. As to quaternary structure, g proteins are composed of 3 units, alpha, beta and gamma.

Its subcellular location is the cell membrane. Functionally, guanine nucleotide-binding proteins (G proteins) are involved as a modulator or transducer in various transmembrane signaling systems. The beta and gamma chains are required for the GTPase activity, for replacement of GDP by GTP, and for G protein-effector interaction. The chain is Guanine nucleotide-binding protein G(I)/G(S)/G(O) subunit gamma-T2 (GNGT2) from Canis lupus familiaris (Dog).